The sequence spans 305 residues: Peroxisome biogenesis factor 2 (305 aa).

Residues 1–15 (MASRKENAKSANRVL) are Peroxisomal matrix-facing. The helical transmembrane segment at 16–42 (RISQLDALELNKALEQLVWSQFTQCFH) threads the bilayer. Topologically, residues 43–48 (GFKPGL) are cytoplasmic. A helical membrane pass occupies residues 49–74 (LARFEPEVKACLWVFLWRFTIYSKNA). Over 75-98 (TVGQSVLNIKYKNDFSPNLRYQPP) the chain is Peroxisomal matrix. N6-acetyllysine is present on Lys-84. The helical transmembrane segment at 99–125 (SKNQKIWYAVCTIGGRWLEERCYDLFR) threads the bilayer. The Cytoplasmic portion of the chain corresponds to 126 to 133 (NHHLASFG). Residues 134-160 (KVKQCVNFVIGLLKLGGLINFLIFLQR) form a helical membrane-spanning segment. The Peroxisomal matrix segment spans residues 161 to 187 (GKFATLTERLLGIHSVFCKPQNICEVG). The chain crosses the membrane as a helical span at residues 188–211 (FEYMNRELLWHGFAEFLIFLLPLI). Over 212–305 (NVQKLKAKLS…GIEMSEVNAL (94 aa)) the chain is Cytoplasmic. The Zn(2+) site is built by Cys-244, Cys-247, Cys-259, His-261, Cys-264, Cys-267, Cys-280, and Cys-283. Residues 244 to 284 (CALCGEWPTMPHTIGCEHIFCYFCAKSSFLFDVYFTCPKCG) form an RING-type zinc finger.

Belongs to the pex2/pex10/pex12 family. In terms of assembly, component of the PEX2-PEX10-PEX12 retrotranslocation channel, composed of PEX2, PEX10 and PEX12. Forms intramolecular and intermolecular disulfide bonds in response to reactive oxygen species (ROS), promoting higher stability.

The protein localises to the peroxisome membrane. The catalysed reaction is [E2 ubiquitin-conjugating enzyme]-S-ubiquitinyl-L-cysteine + [acceptor protein]-L-cysteine = [E2 ubiquitin-conjugating enzyme]-L-cysteine + [acceptor protein]-S-ubiquitinyl-L-cysteine.. The enzyme catalyses S-ubiquitinyl-[E2 ubiquitin-conjugating enzyme]-L-cysteine + [acceptor protein]-L-lysine = [E2 ubiquitin-conjugating enzyme]-L-cysteine + N(6)-ubiquitinyl-[acceptor protein]-L-lysine.. It participates in protein modification; protein ubiquitination. E3 ubiquitin-protein ligase component of a retrotranslocation channel required for peroxisome organization by mediating export of the PEX5 receptor from peroxisomes to the cytosol, thereby promoting PEX5 recycling. The retrotranslocation channel is composed of PEX2, PEX10 and PEX12; each subunit contributing transmembrane segments that coassemble into an open channel that specifically allows the passage of PEX5 through the peroxisomal membrane. PEX2 also regulates peroxisome organization by acting as a E3 ubiquitin-protein ligase. PEX2 ubiquitinates PEX5 during its passage through the retrotranslocation channel: catalyzes monoubiquitination of PEX5 at 'Cys-11', a modification that acts as a signal for PEX5 extraction into the cytosol. Required for pexophagy in response to starvation by mediating ubiquitination of peroxisomal proteins, such as PEX5 and ABCD3/PMP70. Also involved in the response to reactive oxygen species (ROS) by mediating 'Lys-48'-linked polyubiquitination and subsequent degradation of PNPLA2/ATGL, thereby regulating lipolysis. This is Peroxisome biogenesis factor 2 from Homo sapiens (Human).